We begin with the raw amino-acid sequence, 209 residues long: Small ribosomal subunit protein uS4 (209 aa).

The 62-residue stretch at 99-160 (RRLDNVVYRL…GSKEMTLLGQ (62 aa)) folds into the S4 RNA-binding domain.

The protein belongs to the universal ribosomal protein uS4 family. Part of the 30S ribosomal subunit. Contacts protein S5. The interaction surface between S4 and S5 is involved in control of translational fidelity.

Functionally, one of the primary rRNA binding proteins, it binds directly to 16S rRNA where it nucleates assembly of the body of the 30S subunit. In terms of biological role, with S5 and S12 plays an important role in translational accuracy. In Koribacter versatilis (strain Ellin345), this protein is Small ribosomal subunit protein uS4.